Reading from the N-terminus, the 335-residue chain is Cathepsin B (335 aa).

Positions 1–19 are cleaved as a signal peptide; that stretch reads MWQLLATLSCLLVLTSARS. A propeptide spans 20–79 (activation peptide); that stretch reads SLHFPPLSDEMVNYVNKQNTTWKAGHNFYNVDLSYVKKLCGAILGGPKLPQRDAFAADMV. Cystine bridges form between cysteine 93-cysteine 122, cysteine 105-cysteine 150, cysteine 141-cysteine 207, cysteine 142-cysteine 146, cysteine 179-cysteine 211, and cysteine 187-cysteine 198. The active site involves cysteine 108. N-linked (GlcNAc...) asparagine glycosylation occurs at asparagine 192. The residue at position 220 (lysine 220) is an N6-acetyllysine. Active-site residues include histidine 278 and asparagine 298. Positions 333–335 are excised as a propeptide; that stretch reads HQH.

This sequence belongs to the peptidase C1 family. Dimer of a heavy chain and a light chain cross-linked by a disulfide bond. Interacts with SRPX2. Directly interacts with SHKBP1.

The protein resides in the lysosome. It is found in the melanosome. Its subcellular location is the secreted. It localises to the extracellular space. The protein localises to the apical cell membrane. The catalysed reaction is Hydrolysis of proteins with broad specificity for peptide bonds. Preferentially cleaves -Arg-Arg-|-Xaa bonds in small molecule substrates (thus differing from cathepsin L). In addition to being an endopeptidase, shows peptidyl-dipeptidase activity, liberating C-terminal dipeptides.. Its function is as follows. Thiol protease which is believed to participate in intracellular degradation and turnover of proteins. Cleaves matrix extracellular phosphoglycoprotein MEPE. Involved in the solubilization of cross-linked TG/thyroglobulin in the thyroid follicle lumen. Has also been implicated in tumor invasion and metastasis. The chain is Cathepsin B (CTSB) from Ovis aries (Sheep).